The primary structure comprises 311 residues: Syntaxin-111 (311 aa).

At 1-284 (MNDLMTKSFM…AREHQRSSRK (284 aa)) the chain is on the cytoplasmic side. The t-SNARE coiled-coil homology domain maps to 213–275 (VHEIQDRHDA…QGGNKELRKA (63 aa)). Residues 285 to 305 (WLCIGIIILLLLVLLVIVPIA) form a helical; Anchor for type IV membrane protein membrane-spanning segment. Topologically, residues 306-311 (TSFKRS) are vesicular.

Belongs to the syntaxin family. As to expression, expressed in roots and panicles.

It localises to the cell membrane. Its subcellular location is the cytoplasm. Its function is as follows. Vesicle trafficking protein that functions in the secretory pathway. The sequence is that of Syntaxin-111 from Oryza sativa subsp. japonica (Rice).